The chain runs to 819 residues: MLPCLFPAYGSVVACKPSAIDRSPFGLLSQPKQTNRTLIRRPKVTKAFMAIEAMRHCSSSSSSEEGGAAATTAARSAVRERLQLAPPSPSPSPYDTAWVAMVPALRRGGGGPRFPQCVAWIQRNQRGDGSWRHAAAAHQQLGSSPEIVTERDLSSTLACVLALARWDAGSEHVRRGLQFIGRNMSVAMDDQTAAPASGSVVSFAAMLRMAMEMGLEVPAVSQADVRDRDAGVICHGGRTEYTAYVSEGLGNIQNWNEVMKFQRKNGSLFNSPYTTAAALVHNYDAKALQYLDMLLDKFGSAVPAAYPANIQSQLYMVDVLEKMGISRHFVGEIKSILDMTYSCWKQRDEEIVLDMQTCGMAFRMLRMNGYDVSSDELSHFSEPSSFHNSLQGYLNDTRSLLELHKASKVSIAEKEVILDNIGSWTGCLLKEQLLSSAMKRNPLSEEVEYALEFPFYTILDRLDHKRNIEHFDITSSQMLETAYLPCHSNEEIMALGVRDFSSSQFIFQEELQQLNSWVKESRLDQLQFARQKLDYFYFSAAATIFTPELSDVRILWAKNGVLTTVVDDFFDVGGSKEELENLVALVEKWDKNDKTEYYSEQVEIVFSAIYTSTNQLGSMASVVQGRDVTKHLVEIWQELLRSMMTEVEWRQSRYVPTAEEYMENAVVTFALGPVVLPALYLVGPKMPDSVIRSQECSELFRLMSKCGRLLNDVQSYEREGSQGKLNSVSLLALHSGGSVSMEEAVKQIQRPIEKCRRELLKLVVSRGGAVPRPCRELFWSMCKVCHFFYSGGDGFSSPTAKAGALDAVIHEPLNLSCSV.

Residues 1–58 (MLPCLFPAYGSVVACKPSAIDRSPFGLLSQPKQTNRTLIRRPKVTKAFMAIEAMRHCS) constitute a chloroplast transit peptide. The span at 58–76 (SSSSSSEEGGAAATTAARS) shows a compositional bias: low complexity. The tract at residues 58-77 (SSSSSSEEGGAAATTAARSA) is disordered. The Mg(2+) site is built by Asp-567, Asp-571, Asn-711, Ser-715, and Glu-719. The DDXXD motif signature appears at 567 to 571 (DDFFD).

It belongs to the terpene synthase family. Mg(2+) serves as cofactor. Expressed in roots. Highly expressed in stems, flowers and panicle.

The protein resides in the plastid. Its subcellular location is the chloroplast. It catalyses the reaction ent-copalyl diphosphate = ent-beyerene + diphosphate. The catalysed reaction is ent-copalyl diphosphate = ent-kaur-16-ene + diphosphate. The protein operates within secondary metabolite biosynthesis; terpenoid biosynthesis. Its function is as follows. Diterpene cyclase involved in jasmonic acid-dependent defense mechanisms in roots by mediating the biosynthesis of labdane-related diterpenoids (LRDs) natural products such as ent-beyerene, an antimicrobial compound. Catalyzes the cyclization of ent-CDP into ent-beyerene as a major and ent-kaurene as a minor product. May be involved in the catalysis of an early step of the gibberellin (GA) biosynthesis pathway. The sequence is that of Ent-beyerene synthase KSL2, chloroplastic from Oryza sativa subsp. japonica (Rice).